We begin with the raw amino-acid sequence, 362 residues long: Phospho-N-acetylmuramoyl-pentapeptide-transferase (362 aa).

The next 10 membrane-spanning stretches (helical) occupy residues 28–48 (GATV…IALL), 73–93 (TPTM…LLWA), 100–120 (VWIV…DDYL), 134–154 (VKLF…VLVS), 169–189 (TLLI…IVGS), 201–221 (GLAI…VYLV), 241–261 (LAVF…YNAP), 264–284 (MVFM…AIAV), 290–310 (LVLA…IVQV), and 339–359 (TVVV…LATL).

It belongs to the glycosyltransferase 4 family. MraY subfamily. Mg(2+) is required as a cofactor.

It is found in the cell inner membrane. The enzyme catalyses UDP-N-acetyl-alpha-D-muramoyl-L-alanyl-gamma-D-glutamyl-meso-2,6-diaminopimeloyl-D-alanyl-D-alanine + di-trans,octa-cis-undecaprenyl phosphate = di-trans,octa-cis-undecaprenyl diphospho-N-acetyl-alpha-D-muramoyl-L-alanyl-D-glutamyl-meso-2,6-diaminopimeloyl-D-alanyl-D-alanine + UMP. It participates in cell wall biogenesis; peptidoglycan biosynthesis. Functionally, catalyzes the initial step of the lipid cycle reactions in the biosynthesis of the cell wall peptidoglycan: transfers peptidoglycan precursor phospho-MurNAc-pentapeptide from UDP-MurNAc-pentapeptide onto the lipid carrier undecaprenyl phosphate, yielding undecaprenyl-pyrophosphoryl-MurNAc-pentapeptide, known as lipid I. This is Phospho-N-acetylmuramoyl-pentapeptide-transferase from Parvibaculum lavamentivorans (strain DS-1 / DSM 13023 / NCIMB 13966).